A 271-amino-acid polypeptide reads, in one-letter code: Mannosyl-3-phosphoglycerate phosphatase (271 aa).

Asp-13 (nucleophile) is an active-site residue. Residues Asp-13, Asp-15, and Asp-214 each contribute to the Mg(2+) site.

This sequence belongs to the HAD-like hydrolase superfamily. MPGP family. Mg(2+) is required as a cofactor.

It is found in the cytoplasm. The catalysed reaction is 2-O-(alpha-D-mannosyl)-3-phosphoglycerate + H2O = (2R)-2-O-(alpha-D-mannosyl)-glycerate + phosphate. In Escherichia coli O127:H6 (strain E2348/69 / EPEC), this protein is Mannosyl-3-phosphoglycerate phosphatase.